The chain runs to 324 residues: PDZ domain-containing protein MAGIX (324 aa).

The interval Met-1–Pro-26 is disordered. Residues Ser-128–Gln-212 enclose the PDZ domain. The segment covering Gly-216 to Ser-241 has biased composition (basic and acidic residues). The tract at residues Gly-216–Glu-263 is disordered. Phosphoserine is present on Ser-261.

This chain is PDZ domain-containing protein MAGIX (Magix), found in Mus musculus (Mouse).